The sequence spans 147 residues: Large ribosomal subunit protein uL13 (147 aa).

Belongs to the universal ribosomal protein uL13 family. In terms of assembly, part of the 50S ribosomal subunit.

In terms of biological role, this protein is one of the early assembly proteins of the 50S ribosomal subunit, although it is not seen to bind rRNA by itself. It is important during the early stages of 50S assembly. This chain is Large ribosomal subunit protein uL13, found in Nocardioides sp. (strain ATCC BAA-499 / JS614).